The following is a 231-amino-acid chain: Uracil phosphoribosyltransferase (231 aa).

Lys38 to Arg42 contacts GTP. 5-phospho-alpha-D-ribose 1-diphosphate contacts are provided by residues Arg87, Arg112, and Asp140 to Thr148. Uracil-binding positions include Ile203 and Gly208–Ala210. Asp209 serves as a coordination point for 5-phospho-alpha-D-ribose 1-diphosphate.

This sequence belongs to the UPRTase family. The cofactor is Mg(2+).

The enzyme catalyses UMP + diphosphate = 5-phospho-alpha-D-ribose 1-diphosphate + uracil. It participates in pyrimidine metabolism; UMP biosynthesis via salvage pathway; UMP from uracil: step 1/1. With respect to regulation, allosterically activated by GTP. In terms of biological role, catalyzes the conversion of uracil and 5-phospho-alpha-D-ribose 1-diphosphate (PRPP) to UMP and diphosphate. In Methanococcus maripaludis (strain C6 / ATCC BAA-1332), this protein is Uracil phosphoribosyltransferase.